The primary structure comprises 292 residues: Phosphoribulokinase, plasmid (292 aa).

12-20 contacts ATP; sequence GSSGAGTTS.

It belongs to the phosphoribulokinase family. Homooctamer.

The enzyme catalyses D-ribulose 5-phosphate + ATP = D-ribulose 1,5-bisphosphate + ADP + H(+). Its pathway is carbohydrate biosynthesis; Calvin cycle. The protein is Phosphoribulokinase, plasmid (cfxP) of Cupriavidus necator (strain ATCC 17699 / DSM 428 / KCTC 22496 / NCIMB 10442 / H16 / Stanier 337) (Ralstonia eutropha).